The following is a 339-amino-acid chain: Dihydroorotate dehydrogenase (quinone) (339 aa).

FMN-binding positions include 62 to 66 (AGMDK) and threonine 86. Lysine 66 provides a ligand contact to substrate. 111-115 (NRMGF) lines the substrate pocket. Residues asparagine 139 and asparagine 172 each coordinate FMN. Substrate is bound at residue asparagine 172. Serine 175 functions as the Nucleophile in the catalytic mechanism. Residue asparagine 177 coordinates substrate. Residues lysine 217 and threonine 245 each contribute to the FMN site. 246-247 (NT) contacts substrate. Residues glycine 268, glycine 297, and 318 to 319 (YS) contribute to the FMN site.

Belongs to the dihydroorotate dehydrogenase family. Type 2 subfamily. As to quaternary structure, monomer. The cofactor is FMN.

It is found in the cell membrane. The enzyme catalyses (S)-dihydroorotate + a quinone = orotate + a quinol. It participates in pyrimidine metabolism; UMP biosynthesis via de novo pathway; orotate from (S)-dihydroorotate (quinone route): step 1/1. In terms of biological role, catalyzes the conversion of dihydroorotate to orotate with quinone as electron acceptor. This is Dihydroorotate dehydrogenase (quinone) from Shewanella pealeana (strain ATCC 700345 / ANG-SQ1).